We begin with the raw amino-acid sequence, 393 residues long: Methylthioribose kinase (393 aa).

Residues Asn-38, Lys-53, and 107-109 contribute to the ATP site; that span reads EDL. A substrate-binding site is contributed by Asp-225. 242 to 244 lines the ATP pocket; sequence DPE. Arg-332 lines the substrate pocket.

It belongs to the methylthioribose kinase family. In terms of assembly, homodimer.

The catalysed reaction is 5-(methylsulfanyl)-D-ribose + ATP = 5-(methylsulfanyl)-alpha-D-ribose 1-phosphate + ADP + H(+). It functions in the pathway amino-acid biosynthesis; L-methionine biosynthesis via salvage pathway; S-methyl-5-thio-alpha-D-ribose 1-phosphate from S-methyl-5'-thioadenosine (hydrolase route): step 2/2. Functionally, catalyzes the phosphorylation of methylthioribose into methylthioribose-1-phosphate. The sequence is that of Methylthioribose kinase from Bacillus thuringiensis subsp. konkukian (strain 97-27).